A 294-amino-acid polypeptide reads, in one-letter code: StAR-related lipid transfer protein 3 (294 aa).

Residues Asp-1–Ser-66 form the MENTAL domain. The short motif at Gln-55–Glu-61 is the FFAT element. Positions Ser-58 to Arg-77 are disordered. The 214-residue stretch at Ala-79–Ser-292 folds into the START domain.

The protein belongs to the STARD3 family. In terms of assembly, homodimer. Phosphorylated. Phosphorylation allows the tethering of two membranes that participates in the formation of ER-endosome contacts. Phosphorylation of FFAT motif drives membrane tethering between the endoplasmic reticulum and late endosomes that in turn allows the efficient transport of sterol mediated by the START domain.

The protein resides in the late endosome membrane. It carries out the reaction cholesterol(in) = cholesterol(out). In terms of biological role, sterol-binding protein that mediates cholesterol transport from the endoplasmic reticulum to endosomes. The sterol transport mechanism is triggered by phosphorylation of FFAT motif that leads to membrane tethering between the endoplasmic reticulum and late endosomes. Acts as a lipid transfer protein that redirects sterol to the endosome at the expense of the cell membrane and favors membrane formation inside endosomes. In Salvelinus fontinalis (Brook trout), this protein is StAR-related lipid transfer protein 3.